The primary structure comprises 178 residues: ATP synthase subunit delta (178 aa).

It belongs to the ATPase delta chain family. F-type ATPases have 2 components, F(1) - the catalytic core - and F(0) - the membrane proton channel. F(1) has five subunits: alpha(3), beta(3), gamma(1), delta(1), epsilon(1). F(0) has three main subunits: a(1), b(2) and c(10-14). The alpha and beta chains form an alternating ring which encloses part of the gamma chain. F(1) is attached to F(0) by a central stalk formed by the gamma and epsilon chains, while a peripheral stalk is formed by the delta and b chains.

It localises to the cell membrane. Its function is as follows. F(1)F(0) ATP synthase produces ATP from ADP in the presence of a proton or sodium gradient. F-type ATPases consist of two structural domains, F(1) containing the extramembraneous catalytic core and F(0) containing the membrane proton channel, linked together by a central stalk and a peripheral stalk. During catalysis, ATP synthesis in the catalytic domain of F(1) is coupled via a rotary mechanism of the central stalk subunits to proton translocation. Functionally, this protein is part of the stalk that links CF(0) to CF(1). It either transmits conformational changes from CF(0) to CF(1) or is implicated in proton conduction. The polypeptide is ATP synthase subunit delta (Streptococcus pyogenes serotype M3 (strain SSI-1)).